The sequence spans 154 residues: Large ribosomal subunit protein uL13 (154 aa).

Belongs to the universal ribosomal protein uL13 family. Part of the 50S ribosomal subunit.

In terms of biological role, this protein is one of the early assembly proteins of the 50S ribosomal subunit, although it is not seen to bind rRNA by itself. It is important during the early stages of 50S assembly. This chain is Large ribosomal subunit protein uL13, found in Brucella canis (strain ATCC 23365 / NCTC 10854 / RM-666).